Here is a 58-residue protein sequence, read N- to C-terminus: Transactivator protein ORF121 (58 aa).

Functionally, stimulates the expression of 39k gene most probably by increasing IE1 expression. In Lepidoptera (butterflies and moths), this protein is Transactivator protein ORF121 (AC121).